The primary structure comprises 296 residues: Putative ribose uptake protein RbsU (296 aa).

Transmembrane regions (helical) follow at residues 2–24 (NGIA…TIAS), 34–51 (IIGT…YNLV), 58–80 (SGAA…ILTF), 90–112 (RAMP…FALG), 121–139 (LVGF…MTTW), 182–201 (AFLP…AVYL), 221–240 (IISG…SAQP), 245–267 (LATG…IWFL), and 276–295 (MVVT…MTVI).

Belongs to the GRP transporter (TC 2.A.7.5) family.

The protein localises to the cell membrane. Functionally, could be involved in the uptake of ribose. This is Putative ribose uptake protein RbsU (rbsU) from Lactobacillus johnsonii (strain CNCM I-12250 / La1 / NCC 533).